Consider the following 31-residue polypeptide: Aspartate aminotransferase, cytoplasmic (31 aa).

Belongs to the class-I pyridoxal-phosphate-dependent aminotransferase family. In terms of assembly, homodimer. Requires pyridoxal 5'-phosphate as cofactor.

It localises to the cytoplasm. The enzyme catalyses L-aspartate + 2-oxoglutarate = oxaloacetate + L-glutamate. It catalyses the reaction L-cysteine + 2-oxoglutarate = 2-oxo-3-sulfanylpropanoate + L-glutamate. The catalysed reaction is (2S)-2-aminobutanoate + 2-oxoglutarate = 2-oxobutanoate + L-glutamate. It carries out the reaction 3-sulfino-L-alanine + 2-oxoglutarate = 3-sulfinopyruvate + L-glutamate. Biosynthesis of L-glutamate from L-aspartate or L-cysteine. Important regulator of levels of glutamate, the major excitatory neurotransmitter of the vertebrate central nervous system. Acts as a scavenger of glutamate in brain neuroprotection. The aspartate aminotransferase activity is involved in hepatic glucose synthesis during development and in adipocyte glyceroneogenesis. Using L-cysteine as substrate, regulates levels of mercaptopyruvate, an important source of hydrogen sulfide. Mercaptopyruvate is converted into H(2)S via the action of 3-mercaptopyruvate sulfurtransferase (3MST). Hydrogen sulfide is an important synaptic modulator and neuroprotectant in the brain. The polypeptide is Aspartate aminotransferase, cytoplasmic (Oryctolagus cuniculus (Rabbit)).